Here is a 609-residue protein sequence, read N- to C-terminus: Protein tesmin/TSO1-like CXC 3 (609 aa).

A compositionally biased stretch (basic and acidic residues) spans 69 to 84 (ESRFRSQKDVSASKEV). Disordered regions lie at residues 69-102 (ESRF…YKND), 307-328 (PISP…SSCK), 457-477 (LFEQ…KTQQ), and 569-609 (NSKR…TPHH). The 126-residue stretch at 326–451 (SCKRCNCKKS…RCEGCKNAFG (126 aa)) folds into the CRC domain. The segment covering 466-477 (TSGTPGTKKTQQ) has biased composition (polar residues).

Belongs to the lin-54 family. In terms of tissue distribution, ubiquitous but expressed mostly in flowers and at significant levels in leaves. Detected with highest levels in developing ovules and microspores, and in petals.

Its subcellular location is the nucleus. Functionally, plays a role in development of both male and female reproductive tissues. The chain is Protein tesmin/TSO1-like CXC 3 (TCX3) from Arabidopsis thaliana (Mouse-ear cress).